Reading from the N-terminus, the 206-residue chain is Urease accessory protein UreG (206 aa).

Glycine 15 to threonine 22 is a binding site for GTP.

The protein belongs to the SIMIBI class G3E GTPase family. UreG subfamily. In terms of assembly, homodimer. UreD, UreF and UreG form a complex that acts as a GTP-hydrolysis-dependent molecular chaperone, activating the urease apoprotein by helping to assemble the nickel containing metallocenter of UreC. The UreE protein probably delivers the nickel.

Its subcellular location is the cytoplasm. Facilitates the functional incorporation of the urease nickel metallocenter. This process requires GTP hydrolysis, probably effectuated by UreG. The protein is Urease accessory protein UreG of Ralstonia pickettii (strain 12J).